A 264-amino-acid polypeptide reads, in one-letter code: Energy-coupling factor transporter ATP-binding protein EcfA1 (264 aa).

In terms of domain architecture, ABC transporter spans 2–234 (IQVENLSFSY…DEFNPFLIKI (233 aa)). Position 34–41 (34–41 (GKNGSGKS)) interacts with ATP.

This sequence belongs to the ABC transporter superfamily. Energy-coupling factor EcfA family. In terms of assembly, forms a stable energy-coupling factor (ECF) transporter complex composed of 2 membrane-embedded substrate-binding proteins (S component), 2 ATP-binding proteins (A component) and 2 transmembrane proteins (T component).

It is found in the cell inner membrane. Its function is as follows. ATP-binding (A) component of a common energy-coupling factor (ECF) ABC-transporter complex. Unlike classic ABC transporters this ECF transporter provides the energy necessary to transport a number of different substrates. This is Energy-coupling factor transporter ATP-binding protein EcfA1 from Fusobacterium nucleatum subsp. nucleatum (strain ATCC 25586 / DSM 15643 / BCRC 10681 / CIP 101130 / JCM 8532 / KCTC 2640 / LMG 13131 / VPI 4355).